The chain runs to 393 residues: Phosphoglycerate kinase (393 aa).

Residues 21–23 (DFN), R37, 60–63 (HLGR), R119, and R152 contribute to the substrate site. ATP is bound by residues K202, E323, and 349-352 (GGDT).

This sequence belongs to the phosphoglycerate kinase family. In terms of assembly, monomer.

It localises to the cytoplasm. The catalysed reaction is (2R)-3-phosphoglycerate + ATP = (2R)-3-phospho-glyceroyl phosphate + ADP. The protein operates within carbohydrate degradation; glycolysis; pyruvate from D-glyceraldehyde 3-phosphate: step 2/5. This chain is Phosphoglycerate kinase, found in Desulforudis audaxviator (strain MP104C).